The primary structure comprises 74 residues: Ribosome modulation factor (74 aa).

It belongs to the ribosome modulation factor family.

The protein localises to the cytoplasm. In terms of biological role, during stationary phase, converts 70S ribosomes to an inactive dimeric form (100S ribosomes). This is Ribosome modulation factor from Cellvibrio japonicus (strain Ueda107) (Pseudomonas fluorescens subsp. cellulosa).